An 809-amino-acid polypeptide reads, in one-letter code: Glycerol-3-phosphate acyltransferase (809 aa).

The short motif at 306–311 (HRSHMD) is the HXXXXD motif element.

This sequence belongs to the GPAT/DAPAT family.

The protein resides in the cell inner membrane. The enzyme catalyses sn-glycerol 3-phosphate + an acyl-CoA = a 1-acyl-sn-glycero-3-phosphate + CoA. It participates in phospholipid metabolism; CDP-diacylglycerol biosynthesis; CDP-diacylglycerol from sn-glycerol 3-phosphate: step 1/3. The polypeptide is Glycerol-3-phosphate acyltransferase (Vibrio vulnificus (strain YJ016)).